The sequence spans 229 residues: 23 kDa piroplasm membrane protein (229 aa).

Residues 1–19 form the signal peptide; that stretch reads MNKYFKVFFFVLLTHALKS. The Extracellular segment spans residues 20–203; it reads SLIFGQATLQ…EKEETSKKKY (184 aa). The helical transmembrane segment at 204-224 threads the bilayer; the sequence is VLMVVVVVVFVVVASLVVFLV. At 225–229 the chain is on the cytoplasmic side; it reads KFCLK.

The protein resides in the membrane. The chain is 23 kDa piroplasm membrane protein from Theileria annulata.